Consider the following 2458-residue polypeptide: Acetyl-CoA carboxylase 2 (2458 aa).

Phosphoserine is present on Ser35. The segment at 35–155 (SKSEANLIPS…SPSKEDKKQA (121 aa)) is disordered. Residues 51 to 60 (SDNSGETPQR) show a composition bias toward polar residues. Thr70 is subject to Phosphothreonine. The span at 77–87 (ASHKGPKDAGR) shows a compositional bias: basic and acidic residues. 2 positions are modified to phosphoserine: Ser91 and Ser95. The span at 103 to 146 (PLSSSDAAPSPELQANGTGTQGLEATDTNGLSSSARPQGQQAGS) shows a compositional bias: polar residues. Phosphoserine occurs at positions 169, 175, 192, 195, and 200. Residues 174–193 (SSDEDSVAGSSRESTRKGSR) form a disordered region. Thr207 is subject to Phosphothreonine. Ser220 carries the post-translational modification Phosphoserine. Ser222 carries the phosphoserine; by AMPK modification. Positions 259 to 761 (VIEKVLIANN…DTGWLDYLIA (503 aa)) constitute a Biotin carboxylation domain. Residues 414 to 609 (DDLQQGKRIS…LPAAQLQIAM (196 aa)) form the ATP-grasp domain. ATP is bound at residue 458 to 463 (GGGGKG). Ser469 is modified (phosphoserine). Mg(2+) is bound by residues Glu567, Glu580, and Asn582. Positions 567, 580, and 582 each coordinate Mn(2+). Residue Arg584 is part of the active site. Thr753 carries the phosphothreonine modification. Residues 888–962 (FEKENDPTVL…EAGCVVARLE (75 aa)) form the Biotinyl-binding domain. Lys929 carries the post-translational modification N6-biotinyllysine. Ser1340 is subject to Phosphoserine. At Thr1342 the chain carries Phosphothreonine. Ser1360 and Ser1405 each carry phosphoserine. Residues 1695–2025 (PYVTKDLLQA…DNHSPVPIIT (331 aa)) enclose the CoA carboxyltransferase N-terminal domain. A carboxyltransferase region spans residues 1695-2345 (PYVTKDLLQA…EDQVKQEILQ (651 aa)). CoA is bound by residues Arg1934, Lys2238, and Arg2240. The CoA carboxyltransferase C-terminal domain occupies 2029–2345 (PIDREIEFLP…EDQVKQEILQ (317 aa)).

Monomer, homodimer, and homotetramer. Forms filamentous polymers. Interacts with MID1IP1; interaction with MID1IP1 promotes oligomerization and increases its activity in a citrate-dependent manner. It depends on biotin as a cofactor. Requires Mg(2+) as cofactor. Mn(2+) serves as cofactor. Post-translationally, the biotin cofactor is covalently attached to the central biotinyl-binding domain and is required for the catalytic activity. In terms of processing, phosphorylation at Ser-222 by AMPK inactivates the enzyme. Required for the maintenance of skeletal muscle lipid and glucose homeostasis. Widely expressed with highest levels in heart, skeletal muscle, liver, adipose tissue, mammary gland, adrenal gland and colon. Isoform 3 is expressed in skeletal muscle, adipose tissue and liver (at protein level). Isoform 3 is detected at high levels in adipose tissue with lower levels in heart, liver, skeletal muscle and testis.

It is found in the mitochondrion. The catalysed reaction is hydrogencarbonate + acetyl-CoA + ATP = malonyl-CoA + ADP + phosphate + H(+). Its pathway is lipid metabolism; malonyl-CoA biosynthesis; malonyl-CoA from acetyl-CoA: step 1/1. Activity is increased by oligomerization of the protein into filaments. The oligomerization and the activity of the enzyme are inhibited by phosphorylation at Ser-222. Inhibited by its product, malonyl-CoA. Activated by citrate. Activation by MID1IP1 is citrate-dependent. Soraphen A, inhibits the enzyme by preventing the formation of active filamentous oligomers. Functionally, mitochondrial enzyme that catalyzes the carboxylation of acetyl-CoA to malonyl-CoA and plays a central role in fatty acid metabolism. Catalyzes a 2 steps reaction starting with the ATP-dependent carboxylation of the biotin carried by the biotin carboxyl carrier (BCC) domain followed by the transfer of the carboxyl group from carboxylated biotin to acetyl-CoA. Through the production of malonyl-CoA that allosterically inhibits carnitine palmitoyltransferase 1 at the mitochondria, negatively regulates fatty acid oxidation. Together with its cytosolic isozyme ACACA, which is involved in de novo fatty acid biosynthesis, promotes lipid storage. The polypeptide is Acetyl-CoA carboxylase 2 (Homo sapiens (Human)).